The sequence spans 172 residues: Acetolactate synthase small subunit (172 aa).

The region spanning 4–78 (TLSVLVEDEA…NVIKVQDITE (75 aa)) is the ACT domain.

The protein belongs to the acetolactate synthase small subunit family. Dimer of large and small chains.

It carries out the reaction 2 pyruvate + H(+) = (2S)-2-acetolactate + CO2. Its pathway is amino-acid biosynthesis; L-isoleucine biosynthesis; L-isoleucine from 2-oxobutanoate: step 1/4. The protein operates within amino-acid biosynthesis; L-valine biosynthesis; L-valine from pyruvate: step 1/4. The polypeptide is Acetolactate synthase small subunit (ilvH) (Synechocystis sp. (strain ATCC 27184 / PCC 6803 / Kazusa)).